Reading from the N-terminus, the 264-residue chain is Elongation factor Ts (264 aa).

The segment at 76–79 is involved in Mg(2+) ion dislocation from EF-Tu; sequence TDFV.

The protein belongs to the EF-Ts family.

The protein localises to the cytoplasm. Its function is as follows. Associates with the EF-Tu.GDP complex and induces the exchange of GDP to GTP. It remains bound to the aminoacyl-tRNA.EF-Tu.GTP complex up to the GTP hydrolysis stage on the ribosome. This Deinococcus deserti (strain DSM 17065 / CIP 109153 / LMG 22923 / VCD115) protein is Elongation factor Ts.